A 339-amino-acid polypeptide reads, in one-letter code: Phosphate acyltransferase (339 aa).

It belongs to the PlsX family. As to quaternary structure, homodimer. Probably interacts with PlsY.

It localises to the cytoplasm. It catalyses the reaction a fatty acyl-[ACP] + phosphate = an acyl phosphate + holo-[ACP]. It participates in lipid metabolism; phospholipid metabolism. Functionally, catalyzes the reversible formation of acyl-phosphate (acyl-PO(4)) from acyl-[acyl-carrier-protein] (acyl-ACP). This enzyme utilizes acyl-ACP as fatty acyl donor, but not acyl-CoA. This Vesicomyosocius okutanii subsp. Calyptogena okutanii (strain HA) protein is Phosphate acyltransferase.